A 302-amino-acid polypeptide reads, in one-letter code: Heme A synthase (302 aa).

The Cytoplasmic portion of the chain corresponds to 1–8; sequence MFRKQNLK. Residues 9 to 29 form a helical membrane-spanning segment; the sequence is WLGVLATIIMTFVQLGGALVT. At 30 to 67 the chain is on the extracellular side; that stretch reads KTGSEDGCGSSWPLCNGALLPENLPIQTIIELSHRAVS. Cysteine 37 and cysteine 44 are disulfide-bonded. The active site involves glutamate 60. Histidine 63 is a heme o binding site. The helical transmembrane segment at 68-88 threads the bilayer; it reads AISLIVVLWLVITAWKNIGYI. The Cytoplasmic portion of the chain corresponds to 89–93; it reads KEIKP. Residues 94 to 114 traverse the membrane as a helical segment; it reads LSIISVGFLLVQALVGAAAVI. Residues 115 to 125 are Extracellular-facing; that stretch reads WQQNPYVLALH. Histidine 125 provides a ligand contact to heme o. Residues 126 to 146 form a helical membrane-spanning segment; sequence FGISLISFSSVFLMTLIIFSI. Over 147–161 the chain is Cytoplasmic; sequence DKKYEADILFIHKPL. The helical transmembrane segment at 162 to 182 threads the bilayer; the sequence is RILTWLMAIIVYLTIYTGALV. At 183 to 215 the chain is on the extracellular side; it reads RHTKSSLAYGAWPIPFDDIVPHNAHDWVQFSHR. Residue histidine 214 coordinates heme b. The helical transmembrane segment at 216-236 threads the bilayer; that stretch reads GMAFITFIWIMITFIHAIKNY. Over 237-244 the chain is Cytoplasmic; the sequence is SDNRTVRY. The helical transmembrane segment at 245-265 threads the bilayer; it reads GYTASFILVILQVITGALSVI. Over 266 to 270 the chain is Extracellular; the sequence is TNVNL. The helical transmembrane segment at 271–291 threads the bilayer; the sequence is IIALFHALFITYLFGMIAYFI. Histidine 276 is a heme b binding site. The Cytoplasmic portion of the chain corresponds to 292–302; that stretch reads LLMLRTTRSLK.

The protein belongs to the COX15/CtaA family. Type 1 subfamily. Interacts with CtaB. The cofactor is heme b.

Its subcellular location is the cell membrane. The enzyme catalyses Fe(II)-heme o + 2 A + H2O = Fe(II)-heme a + 2 AH2. Its pathway is porphyrin-containing compound metabolism; heme A biosynthesis; heme A from heme O: step 1/1. Its function is as follows. Catalyzes the conversion of heme O to heme A by two successive hydroxylations of the methyl group at C8. The first hydroxylation forms heme I, the second hydroxylation results in an unstable dihydroxymethyl group, which spontaneously dehydrates, resulting in the formyl group of heme A. This chain is Heme A synthase, found in Staphylococcus epidermidis (strain ATCC 12228 / FDA PCI 1200).